Consider the following 308-residue polypeptide: Formamidopyrimidine-DNA glycosylase (308 aa).

The active-site Schiff-base intermediate with DNA is Pro-2. Glu-3 serves as the catalytic Proton donor. Residue Lys-61 is the Proton donor; for beta-elimination activity of the active site. Residues His-100, Arg-120, and Arg-181 each contribute to the DNA site. The FPG-type zinc-finger motif lies at 267-301 (AVYGQEGRPCPRCGALVRRDAFMNRSSFSCPVCQP). Arg-291 serves as the catalytic Proton donor; for delta-elimination activity.

It belongs to the FPG family. Monomer. It depends on Zn(2+) as a cofactor.

It catalyses the reaction Hydrolysis of DNA containing ring-opened 7-methylguanine residues, releasing 2,6-diamino-4-hydroxy-5-(N-methyl)formamidopyrimidine.. It carries out the reaction 2'-deoxyribonucleotide-(2'-deoxyribose 5'-phosphate)-2'-deoxyribonucleotide-DNA = a 3'-end 2'-deoxyribonucleotide-(2,3-dehydro-2,3-deoxyribose 5'-phosphate)-DNA + a 5'-end 5'-phospho-2'-deoxyribonucleoside-DNA + H(+). Its function is as follows. Involved in base excision repair of DNA damaged by oxidation or by mutagenic agents. Acts as a DNA glycosylase that recognizes and removes damaged bases. Has a preference for oxidized purines, such as 7,8-dihydro-8-oxoguanine (8-oxoG). Has AP (apurinic/apyrimidinic) lyase activity and introduces nicks in the DNA strand. Cleaves the DNA backbone by beta-delta elimination to generate a single-strand break at the site of the removed base with both 3'- and 5'-phosphates. This Kineococcus radiotolerans (strain ATCC BAA-149 / DSM 14245 / SRS30216) protein is Formamidopyrimidine-DNA glycosylase.